A 224-amino-acid polypeptide reads, in one-letter code: Glycerol-3-phosphate acyltransferase (224 aa).

6 helical membrane-spanning segments follow: residues 3–23, 54–74, 90–112, 127–147, 152–172, and 183–203; these read IFLSIAINILIFWIGYLIGSL, VFGYKVAIVILFIDIFKVVFA, LYFYIPLIAGLAAQIGQAYPIYF, LISINVLLWPIAGVFFFLLLF, VSLSSLLTTLIMIGFISIPWM, and GFGQFWVNIIIYLFAAALIFW.

Belongs to the PlsY family. In terms of assembly, probably interacts with PlsX.

The protein resides in the cell membrane. The enzyme catalyses an acyl phosphate + sn-glycerol 3-phosphate = a 1-acyl-sn-glycero-3-phosphate + phosphate. The protein operates within lipid metabolism; phospholipid metabolism. Catalyzes the transfer of an acyl group from acyl-phosphate (acyl-PO(4)) to glycerol-3-phosphate (G3P) to form lysophosphatidic acid (LPA). This enzyme utilizes acyl-phosphate as fatty acyl donor, but not acyl-CoA or acyl-ACP. This Mycoplasmopsis synoviae (strain 53) (Mycoplasma synoviae) protein is Glycerol-3-phosphate acyltransferase.